Here is a 304-residue protein sequence, read N- to C-terminus: N-acetylmuramic acid 6-phosphate etherase (304 aa).

Residues 62–225 (IVEAFQQGGR…TTASMILIGK (164 aa)) form the SIS domain. The active-site Proton donor is the Glu-90. Residue Glu-121 is part of the active site.

Belongs to the GCKR-like family. MurNAc-6-P etherase subfamily. As to quaternary structure, homodimer.

The enzyme catalyses N-acetyl-D-muramate 6-phosphate + H2O = N-acetyl-D-glucosamine 6-phosphate + (R)-lactate. Its pathway is amino-sugar metabolism; 1,6-anhydro-N-acetylmuramate degradation. It participates in amino-sugar metabolism; N-acetylmuramate degradation. It functions in the pathway cell wall biogenesis; peptidoglycan recycling. Specifically catalyzes the cleavage of the D-lactyl ether substituent of MurNAc 6-phosphate, producing GlcNAc 6-phosphate and D-lactate. Together with AnmK, is also required for the utilization of anhydro-N-acetylmuramic acid (anhMurNAc) either imported from the medium or derived from its own cell wall murein, and thus plays a role in cell wall recycling. This is N-acetylmuramic acid 6-phosphate etherase from Glaesserella parasuis serovar 5 (strain SH0165) (Haemophilus parasuis).